A 507-amino-acid chain; its full sequence is ATP synthase subunit alpha, chloroplastic (507 aa).

Residue glycine 170–threonine 177 coordinates ATP.

This sequence belongs to the ATPase alpha/beta chains family. F-type ATPases have 2 components, CF(1) - the catalytic core - and CF(0) - the membrane proton channel. CF(1) has five subunits: alpha(3), beta(3), gamma(1), delta(1), epsilon(1). CF(0) has four main subunits: a, b, b' and c.

It is found in the plastid. Its subcellular location is the chloroplast thylakoid membrane. The catalysed reaction is ATP + H2O + 4 H(+)(in) = ADP + phosphate + 5 H(+)(out). Its function is as follows. Produces ATP from ADP in the presence of a proton gradient across the membrane. The alpha chain is a regulatory subunit. This chain is ATP synthase subunit alpha, chloroplastic, found in Oenothera glazioviana (Large-flowered evening primrose).